The sequence spans 1239 residues: Zinc finger and BTB domain-containing protein 40 (1239 aa).

The region spanning 24 to 87 (CDCTISIGTI…MYTGKLPVGK (64 aa)) is the BTB domain. Disordered regions lie at residues 130 to 231 (SAPS…TSTE), 687 to 732 (HLEA…PDPA), and 779 to 801 (KELD…PKKK). Positions 136–145 (TFRKEPEKPQ) are enriched in basic and acidic residues. A compositionally biased stretch (polar residues) spans 181–199 (SVSQEMSVNSPTAQESQRN). Serine 190 is subject to Phosphoserine. The span at 200–212 (AETPAETPTTAEA) shows a compositional bias: low complexity. A compositionally biased stretch (basic and acidic residues) spans 687-703 (HLEANNKEDEKAAKEDS). The residue at position 703 (serine 703) is a Phosphoserine. A compositionally biased stretch (polar residues) spans 705-719 (PGEQNDQGETGSLPG). 10 C2H2-type zinc fingers span residues 807–830 (VTCD…LTEH), 836–858 (FSCE…LRLH), 864–887 (FMCK…KKKH), 893–915 (YACQ…VRTH), 921–944 (YVCR…HTFH), 950–973 (YDCK…HEVH), 978–1000 (HPCP…VVTH), 1006–1029 (FSCG…RTHH), 1046–1069 (LQCS…KAEH), and 1075–1098 (HECD…KCQH). A Glycyl lysine isopeptide (Lys-Gly) (interchain with G-Cter in SUMO2) cross-link involves residue lysine 1066. The C2H2-type 11; atypical zinc-finger motif lies at 1104–1127 (FRCLYCAATFRFPGALQHHVTTEH). Residues 1135-1158 (FPCELCGELFTSQAQLDSHLESEH) form a C2H2-type 12 zinc finger.

Belongs to the krueppel C2H2-type zinc-finger protein family.

It is found in the nucleus. May be involved in transcriptional regulation. This is Zinc finger and BTB domain-containing protein 40 (ZBTB40) from Homo sapiens (Human).